Here is a 527-residue protein sequence, read N- to C-terminus: Protein disulfide-isomerase A2 (527 aa).

An N-terminal signal peptide occupies residues 1 to 20 (MDKQLLPVLLLLLGVSGSWG). The segment at 20-41 (GQGEEPGGPSEVLPEEPTGEEV) is disordered. Positions 29–155 (SEVLPEEPTG…IAEWLRRRVG (127 aa)) constitute a Thioredoxin 1 domain. Active-site nucleophile residues include C74 and C77. The cysteines at positions 74 and 77 are disulfide-linked. 2 N-linked (GlcNAc...) asparagine glycosylation sites follow: N130 and N287. The Thioredoxin 2 domain occupies 355–499 (VIAITAASVA…FSKFLDSGGH (145 aa)). Residues C421 and C424 each act as nucleophile in the active site. An intrachain disulfide couples C421 to C424. The disordered stretch occupies residues 495–527 (DSGGHLPKEEPKEPAASAPEAQANSTLGPKEEL). N-linked (GlcNAc...) asparagine glycosylation is present at N518. Positions 524–527 (KEEL) match the Prevents secretion from ER motif.

The protein belongs to the protein disulfide isomerase family. In terms of assembly, part of a large chaperone multiprotein complex comprising DNAJB11, HSP90B1, HSPA5, HYOU, PDIA2, PDIA4, PDIA6, PPIB, SDF2L1, UGGT1 and very small amounts of ERP29, but not, or at very low levels, CALR nor CANX. Glycosylated. Highly expressed in pancreas.

The protein localises to the endoplasmic reticulum lumen. The enzyme catalyses Catalyzes the rearrangement of -S-S- bonds in proteins.. Functionally, acts as an intracellular estrogen-binding protein. May be involved in modulating cellular levels and biological functions of estrogens in the pancreas. May act as a chaperone that inhibits aggregation of misfolded proteins. This is Protein disulfide-isomerase A2 from Mus musculus (Mouse).